The following is a 413-amino-acid chain: Alpha-1-antitrypsin 1-5 (413 aa).

Residues 1–24 form the signal peptide; that stretch reads MTPSISWCLLLLAGLCCLVPSFLA. 3 N-linked (GlcNAc...) asparagine glycosylation sites follow: Asn-64, Asn-101, and Asn-265. An RCL region spans residues 368–387; sequence AATVLQGGFLSMPPILHFNR.

It belongs to the serpin family.

It is found in the secreted. Functionally, does not inhibit elastase or chymotrypsin. No target protease has been identified to date. The sequence is that of Alpha-1-antitrypsin 1-5 (Serpina1e) from Mus musculus (Mouse).